A 318-amino-acid chain; its full sequence is Putative HTH-type transcriptional regulatory protein MJ1164 (318 aa).

The HTH cro/C1-type domain maps to 131-189 (LKEVREAMGISVGKLAEVAGVSRKAIYKYETQMANPSVDVALKIEEFLDVPLVKGIDLF). A DNA-binding region (H-T-H motif) is located at residues 142-161 (VGKLAEVAGVSRKAIYKYET).

This Methanocaldococcus jannaschii (strain ATCC 43067 / DSM 2661 / JAL-1 / JCM 10045 / NBRC 100440) (Methanococcus jannaschii) protein is Putative HTH-type transcriptional regulatory protein MJ1164.